The following is a 221-amino-acid chain: GTP cyclohydrolase III (221 aa).

This sequence belongs to the archaeal-type GTP cyclohydrolase family.

It carries out the reaction GTP + 3 H2O = 2-amino-5-formylamino-6-(5-phospho-D-ribosylamino)pyrimidin-4(3H)-one + 2 phosphate + 2 H(+). Catalyzes the formation of 2-amino-5-formylamino-6-ribofuranosylamino-4(3H)-pyrimidinone ribonucleotide monophosphate and inorganic phosphate from GTP. Also has an independent pyrophosphate phosphohydrolase activity. In Pyrobaculum islandicum (strain DSM 4184 / JCM 9189 / GEO3), this protein is GTP cyclohydrolase III.